We begin with the raw amino-acid sequence, 172 residues long: Shikimate kinase 2 (172 aa).

9 to 16 (GARAAGKT) serves as a coordination point for ATP.

Belongs to the shikimate kinase family.

The protein localises to the cytoplasm. It carries out the reaction shikimate + ATP = 3-phosphoshikimate + ADP + H(+). It participates in metabolic intermediate biosynthesis; chorismate biosynthesis; chorismate from D-erythrose 4-phosphate and phosphoenolpyruvate: step 5/7. This Syntrophotalea carbinolica (strain DSM 2380 / NBRC 103641 / GraBd1) (Pelobacter carbinolicus) protein is Shikimate kinase 2.